The primary structure comprises 1744 residues: Complement C4-B (1744 aa).

A signal peptide spans 1–19; sequence MRLLWGLIWASSFFTLSLQ. A disulfide bond links C68 and C97. N226 is a glycosylation site (N-linked (GlcNAc...) asparagine). C635 and C669 are oxidised to a cystine. Residues 676–679 constitute a propeptide that is removed on maturation; the sequence is RKKR. 3 cysteine pairs are disulfide-bonded: C702/C728, C703/C735, and C716/C736. An Anaphylatoxin-like domain is found at 702 to 736; it reads CCQDGVTRLPMMRSCEQRAARVQQPDCREPFLSCC. N862 carries an N-linked (GlcNAc...) asparagine glycan. S918 is subject to Phosphoserine. Positions 1010–1013 form a cross-link, isoglutamyl cysteine thioester (Cys-Gln); that stretch reads CGEQ. 2 N-linked (GlcNAc...) asparagine glycosylation sites follow: N1328 and N1391. Residues Y1417, Y1420, and Y1422 each carry the sulfotyrosine modification. Positions 1447-1453 are excised as a propeptide; sequence RRNRRRR. 5 disulfide bridges follow: C1471–C1535, C1583–C1588, C1595–C1673, C1618–C1742, and C1718–C1727. The NTR domain occupies 1595 to 1742; that stretch reads CPRQRRALER…FLQEYGTQGC (148 aa).

As to quaternary structure, in absence of complement activation, circulates in blood as a disulfide-linked trimer of an alpha, beta and gamma chain. Complement C4b is composed of complement C4b-A, complement C4 beta and complement C4 gamma chains that are associated via disulfide bonds. Non-enzymatic component of the C3 convertase, also named C4bC2b, composed of the serine protease complement C2b (C2), as well as complement C4b. Non-enzymatic component of the C5 convertase, also named C4bC2bC3b, composed of the serine protease complement C2b (C2), complement C3b, as well as complement C4b. Interacts with CR1 (via Sushi 1 and Sushi 2 domains). In terms of assembly, (Microbial infection) Binds B.burgdorferi OspC, the interaction is inhibited by complement factor C2. This binding may inhibit the complement cascade and allow the bacteria to survive in the host bloodstream. Prior to secretion, the single-chain precursor is enzymatically cleaved by plasminogen (PLG) to yield non-identical chains alpha, beta and gamma. During activation of the complement systems, the alpha chain is cleaved into C4a and C4b by different proteases depending on the complement pathway: C4b stays linked to the beta and gamma chains, while C4a is released in the plasma. The alpha chain is cleaved by C1S to generate C4a and C4b following activation by the classical complement system. The alpha chain is cleaved to generate C4a and C4b by MASP2 following activation by the lectin complement system. The alpha chain is cleaved by GZMK to generate C4a and C4b following activation by the GZMK complement system. Further degradation of C4b by C1 into the inactive fragments C4c and C4d blocks the generation of C3 convertase. The proteolytic cleavages often are incomplete so that many structural forms can be found in plasma. In terms of processing, upon activation, the internal thioester bond reacts with carbohydrate antigens on the target surface to form amide or ester bonds, leading to covalent association with the surface of pathogens. Post-translationally, complement C4b interacts with complement C3b via a thioester linkage. N- and O-glycosylated. O-glycosylated with a core 1 or possibly core 8 glycan. Complement component C4 is expressed at highest levels in the liver, at moderate levels in the adrenal cortex, adrenal medulla, thyroid gland, and the kidney, and at lowest levels in the heart, ovary, small intestine, thymus, pancreas and spleen. The extra-hepatic sites of expression may be important for the local protection and inflammatory response.

Its subcellular location is the secreted. The protein localises to the synapse. It is found in the cell projection. It localises to the axon. The protein resides in the dendrite. Its subcellular location is the cell surface. Precursor of non-enzymatic components of the classical, lectin and GZMK complement pathways, which consist in a cascade of proteins that leads to phagocytosis and breakdown of pathogens and signaling that strengthens the adaptive immune system. Functionally, non-enzymatic component of C3 and C5 convertases. Generated following cleavage by complement proteases (C1S, MASP2 or GZMK, depending on the complement pathway), it covalently attaches to the surface of pathogens, where it acts as an opsonin that marks the surface of antigens for removal. It then recruits the serine protease complement C2b to form the C3 and C5 convertases, which cleave and activate C3 and C5, respectively, the next components of the complement pathways. Complement C4b-B isotype catalyzes the transacylation of the thioester carbonyl group to form ester bonds with carbohydrate antigens, while C4b-A isotype is responsible for effective binding to form amide bonds with immune aggregates or protein antigens. In terms of biological role, putative humoral mediator released following cleavage by complement proteases (C1S, MASP2 or GZMK, depending on the complement pathway). While it is strongly similar to anaphylatoxins, its role is unclear. Was reported to act as a mediator of local inflammatory process; however these effects were probably due to contamination with C3a and/C5a anaphylatoxins in biological assays. The chain is Complement C4-B from Homo sapiens (Human).